The sequence spans 194 residues: Imidazoleglycerol-phosphate dehydratase (194 aa).

It belongs to the imidazoleglycerol-phosphate dehydratase family.

Its subcellular location is the cytoplasm. It catalyses the reaction D-erythro-1-(imidazol-4-yl)glycerol 3-phosphate = 3-(imidazol-4-yl)-2-oxopropyl phosphate + H2O. It participates in amino-acid biosynthesis; L-histidine biosynthesis; L-histidine from 5-phospho-alpha-D-ribose 1-diphosphate: step 6/9. The polypeptide is Imidazoleglycerol-phosphate dehydratase (Listeria monocytogenes serotype 4b (strain F2365)).